Consider the following 137-residue polypeptide: Large ribosomal subunit protein eL28 (137 aa).

Ser2 is subject to N-acetylserine. Residues Lys58 and Lys65 each participate in a glycyl lysine isopeptide (Lys-Gly) (interchain with G-Cter in SUMO2) cross-link. Ser115 bears the Phosphoserine mark.

The protein belongs to the eukaryotic ribosomal protein eL28 family. Component of the large ribosomal subunit.

The protein resides in the cytoplasm. In terms of biological role, component of the large ribosomal subunit. The ribosome is a large ribonucleoprotein complex responsible for the synthesis of proteins in the cell. This Bos taurus (Bovine) protein is Large ribosomal subunit protein eL28 (RPL28).